Reading from the N-terminus, the 1624-residue chain is MKAIYRGMCPNCRGAITDERLSNKNPCEGCLSEPILSEDYNELIVAVRNALKLRGTLKDWEELYRLNKEVSEIEELFEKSTGFKFWSAQRTWVKRIIRGKSFSIIAPTGMGKSTFGAFISIYFATKGKKSYIVVPTTPLVIQTVKKIESMLEKANVSVRLVYYHGNLRKKEKEEALEKIRNGDFDILITSSQFLATRFKELLKDKKFDLIFVDDVDAFLKASKNIDRSLIMLGFSEEIIGRAWEVIKLKKQLAKLLQNEKKNEEEIEKLNKEIEKIEDEIEEYKRRNKIGILIVASATGSAKGDRIKLYRELLGFEVGSGRSVLRNIVDTYLLPEKPIEEHVVELLRKLGKGGLIFVPIDKGIEYAEELTDYLKSQGFKVELVSAKNKKGLELFEKGEIDYLVGVATYYGTLVRGLDLPHLIRFAIFTGVPKFRFSMDLEQPTIYRVLGLMSEILEFLPEEKKSEGEKLYARLRRLIRNIPQYELMKIEEALAEGLELEGFHNHVLEVFKQSVEFLREVLKDEEVIKKIAENPFLSLKEIEGKLYIEIPDVRTYIQASGRTSRLFAGGITKGLSVIIVDDQKVFNGLIRQMRWRFVEFDIKKFEEVNLKEVLKEIDRDREKVKLVIEGKISEQVKDLVKSALMIVESPNKARTIASFFGQPSKRKIGDLTAYEVSIGDKMLTILASGGHMFDLVTNEGYHGVLILKNNGKPYFVPVYDTIKRCRDCGHQFVDWEQKGVCPRCGSRNVHDALENVKAMRELALEVDEILIGTDPDTEGEKIAWDIRNVLAPYAPNIKRIEFHEVTRPAILRAIREARDINEDRVNAQLVRRIEDRWIGFELSQKLWEVFENRNLSAGRVQTPVLGWIVQRYKEFTESETDFLGIILENGINVTIENAKGEVREVEVKDVIIEEKDVNPLPPYTTDTMLQDASRFLGFSATKTMQLAQDLFEAGLCVTPDTLVSLSDGRIIEIREAVENSEESLLGINGLKPKEAKALKFWEIDWDGPIKVIKLKNGHEIKATPDHGLLVMRDGKIGWVSAKNIREGDYVAFIYNLGHRGGKKYTLPQLLKELGISEYENSSSQELNNREQEMDSKQISIELDERFWYIFGVILGKGTLKGDKVVIFQKDVKPVIEEALPFVRIFESADHIGFSHLILAEVFRRLGVGEGKLHSLVFGLREEYINAMIAGYFDASGTFLRRAVLTSKRGDILRMLSVYLYQIGIVNNLRRDEHAGVWELIISDLEKFREKIYPYLRIKKSQFDKVYSISKNEGDFLPVASIFRKLKFRDGFKNRILDEEIPRDEVAKVLEYAEDSPEKEFLNSLVEARVTWVRVEKIEERHYTGKLYDFTTTTENFISNGIVSHNCTYHRTDSIHVSNTGIEVAKEYITQEIGEEYFTPRKWGEEGAHEAIRPTRPIDTGRLIQLIRDGIITIPKNLTRDHFRLYDLIFRRFMASQMKPAKILYEKAIISTPFKDVEVEGYIDVLYDGWSKIKSLPLRQIPKLEKGQRLRVKEVKQWRAPKVSLYTQGDVIALMKERGIGRPSTYAKIVQTLLQRGYVIETKGKKKLVPTEKGIKVYQYLITKYKDLVSEERTRQLEKIMDMVEEAKADYQDVLNELYEEIKRYVR.

The RG N-terminal-type zinc finger occupies 1 to 42 (MKAIYRGMCPNCRGAITDERLSNKNPCEGCLSEPILSEDYNE). Zn(2+)-binding residues include cysteine 9, cysteine 12, cysteine 27, and cysteine 30. ATP is bound by residues glutamine 89 and 106-113 (APTGMGKS). The 164-residue stretch at 93–256 (VKRIIRGKSF…KLKKQLAKLL (164 aa)) folds into the Helicase ATP-binding domain. A DEAD box motif is present at residues 213 to 216 (DDVD). The topoisomerase I stretch occupies residues 636–1624 (DLVKSALMIV…LYEEIKRYVR (989 aa)). Residues 640–803 (SALMIVESPN…NIKRIEFHEV (164 aa)) form the Toprim domain. Glutamate 646 provides a ligand contact to Mg(2+). The RG C-terminal-type zinc-finger motif lies at 720 to 749 (IKRCRDCGHQFVDWEQKGVCPRCGSRNVHD). 4 residues coordinate Zn(2+): cysteine 723, cysteine 726, cysteine 739, and cysteine 742. Mg(2+) is bound at residue aspartate 772. The Topo IA-type catalytic domain maps to 819 to 1623 (NEDRVNAQLV…ELYEEIKRYV (805 aa)). The region spanning 1107-1222 (IFGVILGKGT…LSVYLYQIGI (116 aa)) is the DOD-type homing endonuclease domain. Tyrosine 1366 functions as the O-(5'-phospho-DNA)-tyrosine intermediate in the catalytic mechanism.

It in the N-terminal section; belongs to the DEAD box helicase family. DDVD subfamily. This sequence in the C-terminal section; belongs to the type IA topoisomerase family. Monomer. Zn(2+) is required as a cofactor. Mg(2+) serves as cofactor. In terms of processing, this protein undergoes a protein self splicing that involves a post-translational excision of the intervening region (intein) followed by peptide ligation.

Its subcellular location is the cytoplasm. It carries out the reaction ATP + H2O = ADP + phosphate + H(+). Its function is as follows. Modifies the topological state of DNA by introducing positive supercoils in an ATP-dependent process, increasing the linking number in steps of +1. Binds to single-stranded DNA, transiently cleaves and then rejoins the ends, introducing a positive supercoil in the process. The scissile phosphodiester is attacked by the catalytic tyrosine of the enzyme, resulting in the formation of a DNA-(5'-phosphotyrosyl)-enzyme intermediate. Probably involved in rewinding DNA strands in regions of the chromosome that have opened up to allow replication, transcription, DNA repair and/or for DNA protection. The protein is Reverse gyrase of Pyrococcus horikoshii (strain ATCC 700860 / DSM 12428 / JCM 9974 / NBRC 100139 / OT-3).